We begin with the raw amino-acid sequence, 132 residues long: MKALTFPKSHRLLKPSDYSRVFNDVTLKVPHRNFLILASANSLGHARVGLIFSKKNLRLAVQRNRIKRQVRETFRLQPDLPGLDIIVLGRQGLDRLDNDTVRSSLNDLWHRVKKKYRQSTPDQSVGNPRGTE.

This sequence belongs to the RnpA family. Consists of a catalytic RNA component (M1 or rnpB) and a protein subunit.

The catalysed reaction is Endonucleolytic cleavage of RNA, removing 5'-extranucleotides from tRNA precursor.. In terms of biological role, RNaseP catalyzes the removal of the 5'-leader sequence from pre-tRNA to produce the mature 5'-terminus. It can also cleave other RNA substrates such as 4.5S RNA. The protein component plays an auxiliary but essential role in vivo by binding to the 5'-leader sequence and broadening the substrate specificity of the ribozyme. This chain is Ribonuclease P protein component, found in Marinobacter nauticus (strain ATCC 700491 / DSM 11845 / VT8) (Marinobacter aquaeolei).